We begin with the raw amino-acid sequence, 127 residues long: I-Kappa-B like protein J1 (127 aa).

ANK repeat units follow at residues 43-76 and 81-111; these read HGNT…DLDE and DGDT…RFGS.

It belongs to the polydnaviridae I-Kappa-B-like protein family.

Functionally, suppresses the host immune response through NF-kappa-B inactivation. Possesses ankyrin repeat domains required for NF-kappa-B binding but lacks the regulatory regions required for dissociation from NF-kappa-B and degradation. Therefore, prevents host NF-kappa-B release and subsequent activation. This is I-Kappa-B like protein J1 (J2) from Microplitis demolitor (Parasitoid wasp).